The sequence spans 296 residues: Methylsterol monooxygenase erg25B (296 aa).

3 helical membrane passes run 50 to 70 (IMSF…WILI), 98 to 118 (FVLL…HPMA), and 125 to 145 (TSVP…FFVL). Positions 140-276 (AIFFVLEDTW…FRWWDYLLDT (137 aa)) constitute a Fatty acid hydroxylase domain. The Histidine box-1 motif lies at 154–158 (HRALH). The Histidine box-2 motif lies at 167-171 (HKIHH). The chain crosses the membrane as a helical span at residues 201–221 (ILWCALTGDLHIFTMYVWIVL). A Histidine box-3 motif is present at residues 251-257 (HHDLHHE).

It belongs to the sterol desaturase family. It depends on Fe cation as a cofactor.

The protein resides in the endoplasmic reticulum membrane. The protein operates within steroid metabolism; ergosterol biosynthesis. In terms of biological role, sterol-C4-methyl oxidase; part of the third module of ergosterol biosynthesis pathway that includes the late steps of the pathway. Erg25B is a catalytic component of the C-4 demethylation complex that catalyzes the conversion of 4,4-dimethylfecosterol into fecosterol via 4-methylfecosterol. The third module or late pathway involves the ergosterol synthesis itself through consecutive reactions that mainly occur in the endoplasmic reticulum (ER) membrane. Firstly, the squalene synthase erg9 catalyzes the condensation of 2 farnesyl pyrophosphate moieties to form squalene, which is the precursor of all steroids. Squalene synthase is crucial for balancing the incorporation of farnesyl diphosphate (FPP) into sterol and nonsterol isoprene synthesis. Secondly, squalene is converted into lanosterol by the consecutive action of the squalene epoxidase erg1 and the lanosterol synthase erg7. Then, the delta(24)-sterol C-methyltransferase erg6 methylates lanosterol at C-24 to produce eburicol. Eburicol is the substrate of the sterol 14-alpha demethylase encoded by cyp51A and cyp51B, to yield 4,4,24-trimethyl ergosta-8,14,24(28)-trienol. The C-14 reductase erg24 then reduces the C14=C15 double bond which leads to 4,4-dimethylfecosterol. A sequence of further demethylations at C-4, involving the C-4 demethylation complex containing the C-4 methylsterol oxidases erg25A or erg25B, the sterol-4-alpha-carboxylate 3-dehydrogenase erg26 and the 3-keto-steroid reductase erg27, leads to the production of fecosterol via 4-methylfecosterol. The C-8 sterol isomerase erg2 then catalyzes the reaction which results in unsaturation at C-7 in the B ring of sterols and thus converts fecosterol to episterol. The sterol-C5-desaturase erg3B then catalyzes the introduction of a C-5 double bond in the B ring to produce 5-dehydroepisterol. The 2 other sterol-C5-desaturases, erg3A and erg3C, seem to be less important in ergosterol biosynthesis. The C-22 sterol desaturase erg5 further converts 5-dehydroepisterol into ergosta-5,7,22,24(28)-tetraen-3beta-ol by forming the C-22(23) double bond in the sterol side chain. Finally, ergosta-5,7,22,24(28)-tetraen-3beta-ol is substrate of the C-24(28) sterol reductases erg4A and erg4B to produce ergosterol. Possible alternative sterol biosynthetic pathways might exist from fecosterol to ergosterol, depending on the activities of the erg3 isoforms. The sequence is that of Methylsterol monooxygenase erg25B from Aspergillus fumigatus (strain ATCC MYA-4609 / CBS 101355 / FGSC A1100 / Af293) (Neosartorya fumigata).